The primary structure comprises 330 residues: MKIAIDAMGGDHAPKAVVLGAMKAIKEYSDLHITLVGKEEEIRQCLMSDERITILHTDEKIESTEEPVRAVRRKKQASMVLAAQQVKDGEADACISAGSTGALMAAGLFVVGRMEGIERPALSPTMPTVDGKGFVMLDVGANVDAKPIHLYQYAVMGSVYAEKVRGIENPRVGLLNVGTEDGKGNELSKQVFAMLKDAPINFVGNVESRDLLQGVADVVVCDGFTGNVALKSLEGTALALFSMLKEQLMSSFTSKLAAAVLKPKLMVLKDKMDYSEYGGAALFGLKAPVIKAHGSSNDQSIFSAIRQTREMVAKEVIPTISSVMEKESLQ.

The protein belongs to the PlsX family. Homodimer. Probably interacts with PlsY.

It is found in the cytoplasm. The catalysed reaction is a fatty acyl-[ACP] + phosphate = an acyl phosphate + holo-[ACP]. It functions in the pathway lipid metabolism; phospholipid metabolism. Catalyzes the reversible formation of acyl-phosphate (acyl-PO(4)) from acyl-[acyl-carrier-protein] (acyl-ACP). This enzyme utilizes acyl-ACP as fatty acyl donor, but not acyl-CoA. This is Phosphate acyltransferase from Bacillus cereus (strain ATCC 14579 / DSM 31 / CCUG 7414 / JCM 2152 / NBRC 15305 / NCIMB 9373 / NCTC 2599 / NRRL B-3711).